Here is a 1497-residue protein sequence, read N- to C-terminus: Collagen alpha-2(V) chain (1497 aa).

The signal sequence occupies residues 1–26 (MMANWVGARPLLILSVLLGYCVSIKA). One can recognise a VWFC domain in the interval 38-96 (IACTQHGQMYLNRDIWKPSPCQICVCDNGAILCDKIECPEVLNCANPITPTGECCPVCP). A disordered region spans residues 103–1265 (TSFGRGRKGQ…PDDTNKTDPG (1163 aa)). A Cell attachment site motif is present at residues 141 to 143 (RGD). Over residues 155 to 164 (PQGIDGEPGV) the composition is skewed to low complexity. Positions 168-180 (PGAPGPPGHPSHP) are enriched in pro residues. Residues 210–225 (PGSVGPVGPRGPQGLQ) show a composition bias toward low complexity. Over residues 234–246 (AGPPGEPGEPGPM) the composition is skewed to pro residues. Pro-288, Pro-291, and Pro-294 each carry 4-hydroxyproline. Low complexity-rich tracts occupy residues 320–338 (EAGP…PRGM) and 425–441 (TPGA…SGPP). Residues 504–506 (RGD) carry the Cell attachment site motif. The span at 550 to 559 (GPKGGQGDPG) shows a compositional bias: gly residues. The segment covering 602 to 611 (SIGIRGQPGS) has biased composition (low complexity). Residues Pro-609 and Pro-615 each carry the 4-hydroxyproline modification. A compositionally biased stretch (basic and acidic residues) spans 708–719 (RGERGNPGERGE). Residues 730 to 739 (GMAGGHGPDG) show a composition bias toward gly residues. Low complexity predominate over residues 744–756 (PGPTGTIGDTGPP). Residues 774 to 785 (KGDRGGIGEKGA) are compositionally biased toward basic and acidic residues. Composition is skewed to low complexity over residues 824–839 (PPGS…ENGP) and 878–891 (LAGS…HGVP). Gly residues predominate over residues 892–901 (GLKGGRGTQG). Positions 917–927 (PPGPAGAPGPA) are enriched in pro residues. 3 consecutive short sequence motifs (cell attachment site) follow at residues 942–944 (RGD), 1065–1067 (RGD), and 1068–1070 (RGD). The segment covering 1061-1070 (AVGERGDRGD) has biased composition (basic and acidic residues). Residues 1091 to 1112 (APGDAGQRGEPGSRGPVGPPGR) are compositionally biased toward low complexity. 2 short sequence motifs (cell attachment site) span residues 1125-1127 (RGD) and 1134-1136 (RGD). Positions 1125-1139 (RGDKGDNGDRGDRGQ) are enriched in basic and acidic residues. 2 stretches are compositionally biased toward pro residues: residues 1169–1179 (PFGPRGPPGPV) and 1209–1224 (EGPP…PGPP). A propeptide spans 1228–1497 (TAALGDIMGH…GLDIGPVCFM (270 aa)) (C-terminal propeptide). The N-linked (GlcNAc...) asparagine glycan is linked to Asn-1260. The region spanning 1264–1497 (PGIHVTLKSL…GLDIGPVCFM (234 aa)) is the Fibrillar collagen NC1 domain. Intrachain disulfides connect Cys-1294-Cys-1326, Cys-1334-Cys-1495, and Cys-1403-Cys-1448. Ca(2+) contacts are provided by Asp-1312, Asn-1314, Gln-1315, and Asp-1320. An N-linked (GlcNAc...) asparagine glycan is attached at Asn-1398.

It belongs to the fibrillar collagen family. Trimers of two alpha 1(V) and one alpha 2(V) chains expressed in most tissues and trimers of one alpha 1(V), one alpha 2(V), and one alpha 3(V) chains with a more limited distribution of expression. In terms of processing, prolines at the third position of the tripeptide repeating unit (G-X-P) are hydroxylated in some or all of the chains. Probably 3-hydroxylated on prolines by LEPREL1. Post-translationally, hydroxylation on proline residues within the sequence motif, GXPG, is most likely to be 4-hydroxy as this fits the requirement for 4-hydroxylation in vertebrates.

The protein localises to the secreted. It is found in the extracellular space. The protein resides in the extracellular matrix. Type V collagen is a member of group I collagen (fibrillar forming collagen). It is a minor connective tissue component of nearly ubiquitous distribution. Type V collagen binds to DNA, heparan sulfate, thrombospondin, heparin, and insulin. Type V collagen is a key determinant in the assembly of tissue-specific matrices. The chain is Collagen alpha-2(V) chain from Mus musculus (Mouse).